A 1277-amino-acid chain; its full sequence is NPC intracellular cholesterol transporter 1 (1277 aa).

The first 22 residues, 1–22 (MSARGPAFGLLLLLLCPVQVFS), serve as a signal peptide directing secretion. Residues 23–269 (QSCVWYGECG…WRILGLDAMY (247 aa)) are Lumenal-facing. Disulfide bonds link cysteine 25-cysteine 74, cysteine 31-cysteine 42, cysteine 63-cysteine 109, cysteine 75-cysteine 113, cysteine 97-cysteine 238, cysteine 100-cysteine 160, cysteine 177-cysteine 184, cysteine 227-cysteine 243, and cysteine 240-cysteine 247. Asparagine 41 contacts cholesterol. Asparagine 70 is a glycosylation site (N-linked (GlcNAc...) asparagine). Glutamine 79 lines the cholesterol pocket. N-linked (GlcNAc...) asparagine glycosylation is found at asparagine 122 and asparagine 135. The tract at residues 175–205 (LLCGREAQACNATNWIEYMFNKDNGQAPFTI) is important for cholesterol binding and cholesterol transfer from NPC1 to liposomes. N-linked (GlcNAc...) asparagine glycosylation is found at asparagine 185 and asparagine 222. The helical transmembrane segment at 270–290 (VIMWSSYMAFLIVFFGAFFAV) threads the bilayer. The Cytoplasmic portion of the chain corresponds to 291–350 (WCYRKRYFVSEYTPIDGNIAFSVNSSDKGQAFCCDPLGAAFERGLRRLFAQWGAFCVRHP). A helical transmembrane segment spans residues 351–371 (GCVVFFSLAFIVACSSGLVFI). Residues 372–621 (RVTTDPVDLW…ELNRESNSDL (250 aa)) are Lumenal-facing. N-linked (GlcNAc...) asparagine glycans are attached at residues asparagine 415, asparagine 452, asparagine 459, and asparagine 478. 2 cysteine pairs are disulfide-bonded: cysteine 468–cysteine 479 and cysteine 516–cysteine 533. In terms of domain architecture, SSD spans 620 to 785 (DLFTILISYA…ITCFVSLLGL (166 aa)). A helical membrane pass occupies residues 622–642 (FTILISYAIMFLYISIALGHI). Over 643–653 (KSCSRLLVDSK) the chain is Cytoplasmic. A helical transmembrane segment spans residues 654–674 (ISLGIAGILIVLSSVACSLGI). Over 675-677 (FSY) the chain is Lumenal. Residues 678–698 (IGVPLTLIVIEVIPFLVLAVG) form a helical membrane-spanning segment. Over 699 to 734 (VDNIFILVQTYQRDERLQGETLDQQLGRVLGEVAPS) the chain is Cytoplasmic. Residues 735-755 (MFLSSFSETVAFFLGGLSVVP) traverse the membrane as a helical segment. Topologically, residues 756–759 (AVHT) are lumenal. The helical transmembrane segment at 760 to 780 (FSLFAGMAVLIDFLLQITCFV) threads the bilayer. The Cytoplasmic segment spans residues 781 to 832 (SLLGLDIKRQEKNRLDVVCCVQGAEDGAGVQASESCLFRFFKNSYAPLLLKD). Residues 833 to 853 (WMRPIVIAVFVGVLSFSIAVL) form a helical membrane-spanning segment. At 854 to 1097 (NKVEIGLDQS…EQYLTVIDDT (244 aa)) the chain is on the lumenal side. Residue asparagine 898 is glycosylated (N-linked (GlcNAc...) asparagine). A disulfide bond links cysteine 909 and cysteine 914. Residues asparagine 916, asparagine 931, asparagine 961, asparagine 968, asparagine 1028, and asparagine 1063 are each glycosylated (N-linked (GlcNAc...) asparagine). 3 cysteine pairs are disulfide-bonded: cysteine 956/cysteine 1011, cysteine 957/cysteine 979, and cysteine 967/cysteine 976. A helical membrane pass occupies residues 1098-1118 (IFNLGVSLGAIFLVTVVLMGC). Topologically, residues 1119–1123 (ELWAT) are cytoplasmic. A helical transmembrane segment spans residues 1124 to 1144 (VIMCVTIAMILVNMFGVMWLW). A topological domain (lumenal) is located at residue glycine 1145. A helical membrane pass occupies residues 1146-1166 (ISLNAVSLVNLVMSCGISVEF). The Cytoplasmic segment spans residues 1167 to 1194 (CSHITRAFTLSTKGSRVDRAEEALAHMG). Residues 1195-1215 (SSVFSGITLTKFGGIVVLAFA) form a helical membrane-spanning segment. The Lumenal portion of the chain corresponds to 1216-1226 (KSQIFQIFYFR). Residues 1227–1247 (MYLAIVLLGATHGLIFLPVLL) traverse the membrane as a helical segment. Topologically, residues 1248-1277 (SYIGPSINKAKSLATQERYKGTEREQLLNF) are cytoplasmic. A required for location in lysosomes region spans residues 1274 to 1277 (LLNF). The Di-leucine motif signature appears at 1274 to 1277 (LLNF).

It belongs to the patched family. Interacts (via the second lumenal domain) with NPC2. Interacts with TMEM97; the interaction may decrease NPC1 availability to the cell. Interacts with TIM1. Interacts with SLC38A9; this interaction inhibits cholesterol-mediated mTORC1 activation via its sterol transport activity. Post-translationally, N-glycosylated. As to expression, detected in corpus luteum, granulosa cells and adrenal gland.

Its subcellular location is the late endosome membrane. The protein resides in the lysosome membrane. It carries out the reaction cholesterol(in) = cholesterol(out). Intracellular cholesterol transporter which acts in concert with NPC2 and plays an important role in the egress of cholesterol from the endosomal/lysosomal compartment. Unesterified cholesterol that has been released from LDLs in the lumen of the late endosomes/lysosomes is transferred by NPC2 to the cholesterol-binding pocket in the N-terminal domain of NPC1. Cholesterol binds to NPC1 with the hydroxyl group buried in the binding pocket. Binds oxysterol with higher affinity than cholesterol. May play a role in vesicular trafficking in glia, a process that may be crucial for maintaining the structural and functional integrity of nerve terminals. Inhibits cholesterol-mediated mTORC1 activation throught its interaction with SLC38A9. This Sus scrofa (Pig) protein is NPC intracellular cholesterol transporter 1.